The sequence spans 761 residues: Elongation factor G, mitochondrial (761 aa).

The N-terminal 42 residues, 1–42, are a transit peptide targeting the mitochondrion; it reads MSVQKMMWVPRKMVGGRIPFFTCSKVFSGFSRRSFHESPLAR. Residues 68-349 form the tr-type G domain; it reads NKLRNIGISA…AIVDYLPNPS (282 aa). GTP-binding positions include 77–84, 148–152, and 202–205; these read AHIDSGKT, DTPGH, and NKMD.

It belongs to the TRAFAC class translation factor GTPase superfamily. Classic translation factor GTPase family. EF-G/EF-2 subfamily. Post-translationally, the precursor is processed in two steps involving mitochondrial intermediate peptidase (MIP) and mitochondrial processing peptidase (MPP).

The protein localises to the mitochondrion. It participates in protein biosynthesis; polypeptide chain elongation. Mitochondrial GTPase that catalyzes the GTP-dependent ribosomal translocation step during translation elongation. During this step, the ribosome changes from the pre-translocational (PRE) to the post-translocational (POST) state as the newly formed A-site-bound peptidyl-tRNA and P-site-bound deacylated tRNA move to the P and E sites, respectively. Catalyzes the coordinated movement of the two tRNA molecules, the mRNA and conformational changes in the ribosome. The polypeptide is Elongation factor G, mitochondrial (Saccharomyces cerevisiae (strain ATCC 204508 / S288c) (Baker's yeast)).